The following is a 136-amino-acid chain: Translation initiation factor 5A (136 aa).

Hypusine is present on K37.

Belongs to the eIF-5A family.

The protein resides in the cytoplasm. Its function is as follows. Functions by promoting the formation of the first peptide bond. The protein is Translation initiation factor 5A (eIF5A) of Thermococcus gammatolerans (strain DSM 15229 / JCM 11827 / EJ3).